The primary structure comprises 192 residues: Transcriptional activator GvpE (192 aa).

Residue 140–145 (KRKVYR) participates in DNA binding. Positions 150–181 (EATFDTVEPAVNRLVTFSLVLKALMIDCNARY) are leucine-zipper.

In terms of assembly, interacts with GvpD, also with c-GvpD from H.salinarum.

Its subcellular location is the cytoplasm. With respect to regulation, the amount of protein that accumulates is controlled by GvpD; GvpD causes a reduction in the amount of GvpE, preventing accumulation of excessive amounts of gas vesicles. Its function is as follows. Plays a regulatory role in gas vesicle synthesis, activates transcription of the gvpA operon, and probably of the gvpD operon. Gas vesicles are hollow, gas filled proteinaceous nanostructures found in some microorganisms. They allow positioning of halobacteria at the optimal depth for growth in the poorly aerated, shallow brine pools of their habitat. Functionally, expression of a 9.5 kb mc-vac DNA fragment containing 2 divergently transcribed regions (gvpD-gvpE-gvpF-gvpG-gvpH-gvpI-gvpJ-gvpK-gvpL-gvpM and gvpA-gvpC-gvpN-gvpO) allows H.volcanii to produce gas vesicles. The sequence is that of Transcriptional activator GvpE from Haloferax mediterranei (strain ATCC 33500 / DSM 1411 / JCM 8866 / NBRC 14739 / NCIMB 2177 / R-4) (Halobacterium mediterranei).